A 235-amino-acid polypeptide reads, in one-letter code: Mitochondrial inner membrane protease ATP23 homolog (235 aa).

His114 is a binding site for a divalent metal cation. The active site involves Glu115. His118 serves as a coordination point for a divalent metal cation.

The protein belongs to the peptidase M76 family.

The protein is Mitochondrial inner membrane protease ATP23 homolog (atp23) of Xenopus laevis (African clawed frog).